The chain runs to 690 residues: Elongation factor G (690 aa).

In terms of domain architecture, tr-type G spans 8-283 (SRCRNIGIMA…AVVDFLPSPS (276 aa)). Residues 17-24 (AHIDAGKT), 81-85 (DTPGH), and 135-138 (NKMD) contribute to the GTP site.

It belongs to the TRAFAC class translation factor GTPase superfamily. Classic translation factor GTPase family. EF-G/EF-2 subfamily.

It localises to the cytoplasm. In terms of biological role, catalyzes the GTP-dependent ribosomal translocation step during translation elongation. During this step, the ribosome changes from the pre-translocational (PRE) to the post-translocational (POST) state as the newly formed A-site-bound peptidyl-tRNA and P-site-bound deacylated tRNA move to the P and E sites, respectively. Catalyzes the coordinated movement of the two tRNA molecules, the mRNA and conformational changes in the ribosome. This is Elongation factor G from Anaplasma marginale (strain St. Maries).